Consider the following 302-residue polypeptide: Bifunctional protein FolD (302 aa).

NADP(+)-binding positions include 165–167 (GRS), serine 190, and isoleucine 231.

The protein belongs to the tetrahydrofolate dehydrogenase/cyclohydrolase family. As to quaternary structure, homodimer.

The enzyme catalyses (6R)-5,10-methylene-5,6,7,8-tetrahydrofolate + NADP(+) = (6R)-5,10-methenyltetrahydrofolate + NADPH. It catalyses the reaction (6R)-5,10-methenyltetrahydrofolate + H2O = (6R)-10-formyltetrahydrofolate + H(+). Its pathway is one-carbon metabolism; tetrahydrofolate interconversion. Functionally, catalyzes the oxidation of 5,10-methylenetetrahydrofolate to 5,10-methenyltetrahydrofolate and then the hydrolysis of 5,10-methenyltetrahydrofolate to 10-formyltetrahydrofolate. The sequence is that of Bifunctional protein FolD from Prochlorococcus marinus (strain SARG / CCMP1375 / SS120).